The following is a 197-amino-acid chain: FMN-dependent NADH:quinone oxidoreductase 1 (197 aa).

Residues Ser10, 16–18 (SQS), 93–96 (MYNF), and 137–140 (TRGG) each bind FMN.

The protein belongs to the azoreductase type 1 family. In terms of assembly, homodimer. The cofactor is FMN.

The enzyme catalyses 2 a quinone + NADH + H(+) = 2 a 1,4-benzosemiquinone + NAD(+). The catalysed reaction is N,N-dimethyl-1,4-phenylenediamine + anthranilate + 2 NAD(+) = 2-(4-dimethylaminophenyl)diazenylbenzoate + 2 NADH + 2 H(+). In terms of biological role, quinone reductase that provides resistance to thiol-specific stress caused by electrophilic quinones. Also exhibits azoreductase activity. Catalyzes the reductive cleavage of the azo bond in aromatic azo compounds to the corresponding amines. The chain is FMN-dependent NADH:quinone oxidoreductase 1 from Photobacterium profundum (strain SS9).